The primary structure comprises 164 residues: Outer membrane protein assembly factor BamE (164 aa).

The N-terminal stretch at 1-19 (MHAFFPRLLLLLLFLPLTH) is a signal peptide. Residues 111–164 (PAFSESEPAQNFFSPEQTFTPAPDTDSNMNEEPDKKGTVNFLKENQTNFYKDNQ) form a disordered region. Polar residues-rich tracts occupy residues 117-140 (EPAQ…SNMN) and 153-164 (KENQTNFYKDNQ).

Belongs to the BamE family. In terms of assembly, part of the Bam complex.

Its subcellular location is the cell outer membrane. Part of the outer membrane protein assembly complex, which is involved in assembly and insertion of beta-barrel proteins into the outer membrane. The chain is Outer membrane protein assembly factor BamE from Nitrosomonas europaea (strain ATCC 19718 / CIP 103999 / KCTC 2705 / NBRC 14298).